A 470-amino-acid polypeptide reads, in one-letter code: ATP synthase subunit beta (470 aa).

Residue 157 to 164 (GGAGVGKT) coordinates ATP.

This sequence belongs to the ATPase alpha/beta chains family. As to quaternary structure, F-type ATPases have 2 components, CF(1) - the catalytic core - and CF(0) - the membrane proton channel. CF(1) has five subunits: alpha(3), beta(3), gamma(1), delta(1), epsilon(1). CF(0) has three main subunits: a(1), b(2) and c(9-12). The alpha and beta chains form an alternating ring which encloses part of the gamma chain. CF(1) is attached to CF(0) by a central stalk formed by the gamma and epsilon chains, while a peripheral stalk is formed by the delta and b chains.

It localises to the cell inner membrane. The catalysed reaction is ATP + H2O + 4 H(+)(in) = ADP + phosphate + 5 H(+)(out). Functionally, produces ATP from ADP in the presence of a proton gradient across the membrane. The catalytic sites are hosted primarily by the beta subunits. In Geobacter metallireducens (strain ATCC 53774 / DSM 7210 / GS-15), this protein is ATP synthase subunit beta.